Here is a 152-residue protein sequence, read N- to C-terminus: D-aminoacyl-tRNA deacylase (152 aa).

The short motif at 142 to 143 (GP) is the Gly-cisPro motif, important for rejection of L-amino acids element.

The protein belongs to the DTD family. In terms of assembly, homodimer.

It is found in the cytoplasm. It carries out the reaction glycyl-tRNA(Ala) + H2O = tRNA(Ala) + glycine + H(+). The catalysed reaction is a D-aminoacyl-tRNA + H2O = a tRNA + a D-alpha-amino acid + H(+). Its function is as follows. An aminoacyl-tRNA editing enzyme that deacylates mischarged D-aminoacyl-tRNAs. Also deacylates mischarged glycyl-tRNA(Ala), protecting cells against glycine mischarging by AlaRS. Acts via tRNA-based rather than protein-based catalysis; rejects L-amino acids rather than detecting D-amino acids in the active site. By recycling D-aminoacyl-tRNA to D-amino acids and free tRNA molecules, this enzyme counteracts the toxicity associated with the formation of D-aminoacyl-tRNA entities in vivo and helps enforce protein L-homochirality. The polypeptide is D-aminoacyl-tRNA deacylase (Burkholderia lata (strain ATCC 17760 / DSM 23089 / LMG 22485 / NCIMB 9086 / R18194 / 383)).